Here is a 191-residue protein sequence, read N- to C-terminus: ECF RNA polymerase sigma-E factor (191 aa).

Residues 1 to 153 (MSEQLTDQVL…MAITLRELDG (153 aa)) are binds RNAP core. Residues 25–92 (LVVRYQHKVA…KNYLVAQGRR (68 aa)) form a sigma-70 factor domain-2 region. The Polymerase core binding motif lies at 48-61 (DVVQEAFIKAYRAL). The tract at residues 129–180 (QIVFRTIESLPEDLRMAITLRELDGLSYEEIAAIMDCPVGTVRSRIFRAREA) is sigma-70 factor domain-4. The segment at residues 156 to 175 (YEEIAAIMDCPVGTVRSRIF) is a DNA-binding region (H-T-H motif).

This sequence belongs to the sigma-70 factor family. ECF subfamily. Interacts transiently with the RNAP catalytic core formed by RpoA, RpoB, RpoC and RpoZ (2 alpha, 1 beta, 1 beta' and 1 omega subunit) to form the RNAP holoenzyme that can initiate transcription. Interacts 1:1 with anti-sigma-E factor RseA which prevents binding to RNAP catalytic core.

Its subcellular location is the cytoplasm. With respect to regulation, ECF sigma-E is held in an inactive form by its cognate anti-sigma factor (RseA) until released by regulated intramembrane proteolysis (RIP). RIP occurs when an extracytoplasmic signal (periplasmic stress and excess LPS) triggers a concerted proteolytic cascade to transmit information and elicit cellular responses. The anti-sigma factor RseA is an inner membrane protein, binding sigma-E in the cytoplasm and RseB in the periplasm. RseA is first cut extracytoplasmically (site-1 protease, S1P, by DegS), then within the membrane itself (site-2 protease, S2P, by RseP), while cytoplasmic proteases (predominantly ClpX-ClpP) finish degrading the regulatory protein, liberating sigma-E. Degradation of RseA requires 2 signals to activate DegS; an outer membrane protein (OMP) signal activates DegS, while an LPS signal causes release of RseB from RseA, freeing RseA to be cleaved. Its function is as follows. Sigma factors are initiation factors that promote the attachment of RNA polymerase (RNAP) to specific initiation sites and are then released. Extracytoplasmic function (ECF) sigma-E controls the envelope stress response, responding to periplasmic protein stress, increased levels of periplasmic lipopolysaccharide (LPS) as well as heat shock and oxidative stress; it controls protein processing in the extracytoplasmic compartment. This is ECF RNA polymerase sigma-E factor (rpoE) from Escherichia coli O157:H7.